The following is a 259-amino-acid chain: Proteasome subunit alpha (259 aa).

Belongs to the peptidase T1A family. The 20S proteasome core is composed of 14 alpha and 14 beta subunits that assemble into four stacked heptameric rings, resulting in a barrel-shaped structure. The two inner rings, each composed of seven catalytic beta subunits, are sandwiched by two outer rings, each composed of seven alpha subunits. The catalytic chamber with the active sites is on the inside of the barrel. Has a gated structure, the ends of the cylinder being occluded by the N-termini of the alpha-subunits. Is capped at one or both ends by the proteasome regulatory ATPase, PAN.

The protein localises to the cytoplasm. The formation of the proteasomal ATPase PAN-20S proteasome complex, via the docking of the C-termini of PAN into the intersubunit pockets in the alpha-rings, triggers opening of the gate for substrate entry. Interconversion between the open-gate and close-gate conformations leads to a dynamic regulation of the 20S proteasome proteolysis activity. In terms of biological role, component of the proteasome core, a large protease complex with broad specificity involved in protein degradation. This chain is Proteasome subunit alpha, found in Methanococcus maripaludis (strain C7 / ATCC BAA-1331).